A 178-amino-acid polypeptide reads, in one-letter code: Large ribosomal subunit protein uL6 (178 aa).

It belongs to the universal ribosomal protein uL6 family. Part of the 50S ribosomal subunit.

Its function is as follows. This protein binds to the 23S rRNA, and is important in its secondary structure. It is located near the subunit interface in the base of the L7/L12 stalk, and near the tRNA binding site of the peptidyltransferase center. The chain is Large ribosomal subunit protein uL6 from Staphylococcus aureus (strain Mu3 / ATCC 700698).